The primary structure comprises 306 residues: Aspartate carbamoyltransferase catalytic subunit (306 aa).

Carbamoyl phosphate contacts are provided by Arg-56 and Thr-57. Lys-84 provides a ligand contact to L-aspartate. The carbamoyl phosphate site is built by Arg-106, His-136, and Gln-139. L-aspartate-binding residues include Arg-169 and Arg-221. Ala-262 and Pro-263 together coordinate carbamoyl phosphate.

It belongs to the aspartate/ornithine carbamoyltransferase superfamily. ATCase family. Heterododecamer (2C3:3R2) of six catalytic PyrB chains organized as two trimers (C3), and six regulatory PyrI chains organized as three dimers (R2).

The catalysed reaction is carbamoyl phosphate + L-aspartate = N-carbamoyl-L-aspartate + phosphate + H(+). It participates in pyrimidine metabolism; UMP biosynthesis via de novo pathway; (S)-dihydroorotate from bicarbonate: step 2/3. In terms of biological role, catalyzes the condensation of carbamoyl phosphate and aspartate to form carbamoyl aspartate and inorganic phosphate, the committed step in the de novo pyrimidine nucleotide biosynthesis pathway. This Streptococcus gordonii (strain Challis / ATCC 35105 / BCRC 15272 / CH1 / DL1 / V288) protein is Aspartate carbamoyltransferase catalytic subunit.